Consider the following 464-residue polypeptide: F-box/FBD/LRR-repeat protein At1g80470 (464 aa).

Residues 15–62 (DWISGLADDLLLQILSKVPTRESVFTSRMSKRWRNLWRHVPALDLDSS) form the F-box domain. LRR repeat units follow at residues 96–122 (EEHC…TILS), 123–150 (KVNI…TLYS), 152–178 (VFDA…KFDG), 197–222 (IITH…KLES), 223–249 (MRED…SITD), and 273–298 (DAED…TISA). The region spanning 359–413 (KEEINLSLVPHCFESSLEYVQLKVPITVSETSSKMELAIYFVRNCSVLKKLMLNE) is the FBD domain.

The sequence is that of F-box/FBD/LRR-repeat protein At1g80470 from Arabidopsis thaliana (Mouse-ear cress).